The chain runs to 262 residues: Phosphatidylglycerol--prolipoprotein diacylglyceryl transferase (262 aa).

Transmembrane regions (helical) follow at residues 17–37, 57–77, 95–115, and 119–139; these read LAIHWYGLMYLIGFALVYALG, LIFYSVLGVVLGGRLGYVLFY, GGMSFHGGLIGVIVVMLLFAH, and LGFFTVSDFIAPLIPLGLAAG. Arg-140 is an a 1,2-diacyl-sn-glycero-3-phospho-(1'-sn-glycerol) binding site. Transmembrane regions (helical) follow at residues 173–193, 200–220, and 227–247; these read PSQLYELGLEGIVLFALLWWY, AGQVSAMFLMGYGAFRFLVEF, and FLGLLAAGLSMGQWLSIPMVL.

It belongs to the Lgt family.

The protein localises to the cell inner membrane. It catalyses the reaction L-cysteinyl-[prolipoprotein] + a 1,2-diacyl-sn-glycero-3-phospho-(1'-sn-glycerol) = an S-1,2-diacyl-sn-glyceryl-L-cysteinyl-[prolipoprotein] + sn-glycerol 1-phosphate + H(+). It functions in the pathway protein modification; lipoprotein biosynthesis (diacylglyceryl transfer). Its function is as follows. Catalyzes the transfer of the diacylglyceryl group from phosphatidylglycerol to the sulfhydryl group of the N-terminal cysteine of a prolipoprotein, the first step in the formation of mature lipoproteins. The sequence is that of Phosphatidylglycerol--prolipoprotein diacylglyceryl transferase from Bordetella bronchiseptica (strain ATCC BAA-588 / NCTC 13252 / RB50) (Alcaligenes bronchisepticus).